We begin with the raw amino-acid sequence, 162 residues long: UPF0262 protein Acry_0160 (162 aa).

Belongs to the UPF0262 family.

The sequence is that of UPF0262 protein Acry_0160 from Acidiphilium cryptum (strain JF-5).